The sequence spans 190 residues: Cytoplasmic envelopment protein 3 (190 aa).

A lipid anchor (N-myristoyl glycine; by host) is attached at G2. A disordered region spans residues 27 to 190; sequence RQVSLRSYDN…TKKPAASLPF (164 aa). Over residues 30–43 the composition is skewed to polar residues; that stretch reads SLRSYDNIPPTSSS. Residues 44–58 are compositionally biased toward acidic residues; the sequence is DEGEDDDDGEDDDNE. A compositionally biased stretch (basic and acidic residues) spans 80-90; sequence SHREATHDGSK. The segment covering 108 to 123 has biased composition (basic residues); that stretch reads KQSKKKKKPSKHHHHQ. Residues 130–139 are compositionally biased toward acidic residues; it reads ETDDLDEEDT.

This sequence belongs to the herpesviridae cytoplasmic envelopment protein 3 family. In terms of assembly, interacts with cytoplasmic envelopment protein 2; this interaction is essential for the proper localization of each protein to the assembly complex and thus for the production of infectious virus. Post-translationally, myristoylation and palmitoylation (probably on one or more of the nearby cysteines at the N-terminus) enable membrane-binding and Golgi apparatus-specific targeting and are essential for efficient packaging. Phosphorylated. Phosphorylation does not seem to be required for recycling to the host Golgi apparatus. Packaging is selective for underphosphorylated forms.

Its subcellular location is the virion tegument. It is found in the virion membrane. It localises to the host cell membrane. The protein resides in the host Golgi apparatus membrane. Its function is as follows. Plays an important role in the cytoplasmic envelopment of tegument proteins and capsids during the assembly and egress processes. Also participates in viral entry at the fusion step probably by regulating the core fusion machinery. In Human cytomegalovirus (strain AD169) (HHV-5), this protein is Cytoplasmic envelopment protein 3 (UL99).